Consider the following 466-residue polypeptide: Asparagine--tRNA ligase (466 aa).

This sequence belongs to the class-II aminoacyl-tRNA synthetase family. As to quaternary structure, homodimer.

Its subcellular location is the cytoplasm. It carries out the reaction tRNA(Asn) + L-asparagine + ATP = L-asparaginyl-tRNA(Asn) + AMP + diphosphate + H(+). The sequence is that of Asparagine--tRNA ligase from Klebsiella pneumoniae subsp. pneumoniae (strain ATCC 700721 / MGH 78578).